Reading from the N-terminus, the 509-residue chain is MDEFQREGNKHRFWQQCFLYQIFFGEDLNAMVHDHHLDRSSSFERTEILISNYFSFLTVKRLIRRIRQQNDSTGLFGNCDPNQFIDRNRNSYSESVLEALTVILEVSFAMRSKHFLEGINGWKSIRSIHCIFPLMEDKFPYSNYISDIRVPYSIHPELLVRTFRRWIRDTPSLHLLRFILHSWKNSFSAENLQKAMVAPRENMRLSLFLWNSYVYECESFLVPLLKRFSHSQSLLYGSFPNXNHFVRKIKHIVIFPXINISTXRIWLLKDPFIQYVRYGERSLIALKGTHLQVKKCRYHLFHFWQYYFHLWSQPYRICILELSKNYSFFLGYFLSFKMKPLVVRTKMLNDLFITNLITNELNPIAPIRSILFFLAKERFCDISGQTISKLSWTSLSDDDILDRFDRICRNLFHYYSGSINPDGLYYIKYILLLPCAKTLACKHKSTIRVVREESGSELFTKSFSKEREFISSSFSKTRSQRERFWNSDIIQINPLSNSWQKIQNKQVEN.

This sequence belongs to the intron maturase 2 family. MatK subfamily.

The protein localises to the plastid. It localises to the chloroplast. In terms of biological role, usually encoded in the trnK tRNA gene intron. Probably assists in splicing its own and other chloroplast group II introns. The protein is Maturase K of Amentotaxus argotaenia (Chinese flowering yew).